Here is a 788-residue protein sequence, read N- to C-terminus: Leucine-rich repeat and fibronectin type-III domain-containing protein 2 (788 aa).

Residues 1–20 form the signal peptide; that stretch reads METLLGGLLAFGMAFAVVDA. The LRRNT domain occupies 21 to 52; it reads CPKYCVCQNLSESLGTLCPSKGLLFVPPDIDR. The Extracellular portion of the chain corresponds to 21 to 534; the sequence is CPKYCVCQNL…MHSQILGGTM (514 aa). N-linked (GlcNAc...) asparagine glycosylation occurs at Asn-29. 7 LRR repeats span residues 53–74, 77–98, 101–122, 125–146, 150–171, 174–195, and 198–219; these read RTVELRLGGNFIIHIGRQDFAN, GLVDLTLSRNTISHIQPFSFLD, SLRSLHLDSNRLPSLGEDTLRG, NLQHLIVNNNQLGGIADDAFED, TLEDLDLSYNNLHGLPWDSVRR, NLHQLSLDHNLLDHIAEGTFAD, and KLARLDLTSNRLQKLPPDPIFA. The region spanning 242-288 is the LRRCT domain; that stretch reads NPLHCNCELLWLRRLERDDDLETCGSPGSLKGRYFWHIREEEFVCEP. In terms of domain architecture, Ig-like spans 289-375; sequence PLITQHTHKL…GEATATVEVS (87 aa). Cysteines 310 and 359 form a disulfide. N-linked (GlcNAc...) asparagine glycans are attached at residues Asn-332, Asn-341, and Asn-384. The interval 383 to 423 is disordered; it reads SNSTSRMAPPKSRLSDITGSSKTSRGGGGSGAGEPPKSTPE. The Fibronectin type-III domain maps to 422 to 518; the sequence is PERAVLVSDV…GCAQFFTKAD (97 aa). Residues 535 to 555 traverse the membrane as a helical segment; that stretch reads ILVIGGIIVATLLVFIVILMV. Over 556-788 the chain is Cytoplasmic; it reads RYKVCNHDTP…SSEWVMESTV (233 aa). The segment covering 620–631 has biased composition (low complexity); the sequence is CDSSSSSSLGSG. Disordered regions lie at residues 620-655 and 668-711; these read CDSSSSSSLGSGEAAGLGRGPWRLPPPAPRPKPSLD and SQRK…RSLL. Over residues 642–651 the composition is skewed to pro residues; it reads RLPPPAPRPK. A PDZ-binding motif is present at residues 785–788; the sequence is ESTV.

It belongs to the LRFN family. As to quaternary structure, forms heteromeric complexes with LRFN1, LRFN3, LRFN4 and LRFN5. Can form homomeric complexes, but not across cell junctions. Interacts with DLG4. Directly interacts with DLG1, DLG2 and DLG3. Directly interacts with 2 NMDA receptor subunits GRIN1 and GRIN2A. Post-translationally, glycosylated. Predominantly expressed in the brain, with a weak, but broad expression in the cerebral cortex and diencephalic nuclei. Strongly expressed in both the pyramidal layer and the dentate gyrus of the hippocampus. Also detected in other parts of the central nervous system, including the olfactory bulb, pons, cerebellum, and medulla oblongata, as well as in the peripheral nervous system, such as the ganglia of cranial nerves and the dorsal root ganglion during gestation.

The protein resides in the membrane. It is found in the synapse. The protein localises to the postsynaptic cell membrane. In terms of biological role, promotes neurite outgrowth in hippocampal neurons. Enhances the cell surface expression of 2 NMDA receptor subunits GRIN1 and GRIN2A. May play a role in redistributing DLG4 to the cell periphery. The chain is Leucine-rich repeat and fibronectin type-III domain-containing protein 2 (Lrfn2) from Mus musculus (Mouse).